The following is a 761-amino-acid chain: NADP-dependent malic enzyme (761 aa).

The interval 1-437 (MPGIDKTDRA…QLSARRDPIA (437 aa)) is malic enzyme. The active-site Proton donor is Tyr-49. Lys-104 serves as the catalytic Proton acceptor. Residues Glu-146, Asp-147, and Asp-172 each contribute to the a divalent metal cation site. NADP(+)-binding positions include 205-208 (AGAA), Asn-297, and Asn-329. The phosphate acetyltransferase stretch occupies residues 438 to 761 (STLQRIVERV…AAIAAYNAGT (324 aa)).

This sequence in the N-terminal section; belongs to the malic enzymes family. In the C-terminal section; belongs to the phosphate acetyltransferase and butyryltransferase family. As to quaternary structure, homooctamer. The cofactor is Mg(2+). Requires Mn(2+) as cofactor.

The enzyme catalyses (S)-malate + NADP(+) = pyruvate + CO2 + NADPH. It catalyses the reaction oxaloacetate + H(+) = pyruvate + CO2. The protein is NADP-dependent malic enzyme (tme) of Rhizobium meliloti (strain 1021) (Ensifer meliloti).